A 417-amino-acid polypeptide reads, in one-letter code: MSQRKRYSLNVVTSPSIPSPTPSAPIRTNESNWEAASPASAASSFLPNVHHGGTVLNPGLGIMRSPSLNKSGAFGRSGSSGSSTVIEPSNIKLLLIGDANVGKTAMILSYCRELLTRAEMSRSARLRHQQQQQHKDLGLKKTVVNHRLSMKEKRKRYSSNDFEKEFKDINHFADETSDFGNPNIGDDNNHEMADPNEIVIETRSTIGIDIKTNLVNIDNRFFNVILWDTAGQERYQNAIIPSLYKKTNAVILTYDITNAKSFQSCMERWIVQALENFSSQDLLKARFFLVGNKIDLYKERQVTHYDVVQMVQEMQLKHGIKISGNFEVSCKWVNVVERTMNMIILDLVENGCFENNDPCVSITTSDDVQGHEQEFHDTVEEPFNFTRQRQHQLEKNNTVDITKPNDDIANNQSICCV.

The disordered stretch occupies residues 1-34 (MSQRKRYSLNVVTSPSIPSPTPSAPIRTNESNWE). GTP contacts are provided by residues 97–104 (GDANVGKT), 228–232 (DTAGQ), and 292–295 (NKID). S-geranylgeranyl cysteine attachment occurs at residues C415 and C416.

Belongs to the small GTPase superfamily. Rab family. In terms of assembly, interacts with MYO2 (via C-terminal tail domain). Interacts with YIF1, YIP3, YIP4 and YIP5.

It is found in the endoplasmic reticulum membrane. The protein localises to the bud tip. Its subcellular location is the bud neck. Its function is as follows. Involved in the positive control of both endoplasmic reticulum (ER) and mitochondrion inheritance during cell divison. Required for the MYO2-dependent retention of newly inherited mitochondria at the bud tip in developing daughter cells. The chain is GTP-binding protein YPT11 (YPT11) from Saccharomyces cerevisiae (strain AWRI1631) (Baker's yeast).